The chain runs to 95 residues: Phosphoribosyl-ATP pyrophosphatase (95 aa).

This sequence belongs to the PRA-PH family.

The protein resides in the cytoplasm. It catalyses the reaction 1-(5-phospho-beta-D-ribosyl)-ATP + H2O = 1-(5-phospho-beta-D-ribosyl)-5'-AMP + diphosphate + H(+). The protein operates within amino-acid biosynthesis; L-histidine biosynthesis; L-histidine from 5-phospho-alpha-D-ribose 1-diphosphate: step 2/9. The sequence is that of Phosphoribosyl-ATP pyrophosphatase from Sulfolobus acidocaldarius (strain ATCC 33909 / DSM 639 / JCM 8929 / NBRC 15157 / NCIMB 11770).